A 296-amino-acid polypeptide reads, in one-letter code: Polyamine aminopropyltransferase (296 aa).

The PABS domain maps to 5–238 (ELWYETLHAN…GIMTFAWATQ (234 aa)). Glutamine 33 is a binding site for S-methyl-5'-thioadenosine. Residues histidine 64 and aspartate 88 each coordinate spermidine. Residues glutamate 108 and 140-141 (DG) contribute to the S-methyl-5'-thioadenosine site. Aspartate 158 acts as the Proton acceptor in catalysis. 158–161 (DCTD) provides a ligand contact to spermidine. Proline 165 is a binding site for S-methyl-5'-thioadenosine.

Belongs to the spermidine/spermine synthase family. In terms of assembly, homodimer or homotetramer.

It is found in the cytoplasm. The catalysed reaction is S-adenosyl 3-(methylsulfanyl)propylamine + putrescine = S-methyl-5'-thioadenosine + spermidine + H(+). The protein operates within amine and polyamine biosynthesis; spermidine biosynthesis; spermidine from putrescine: step 1/1. Its function is as follows. Catalyzes the irreversible transfer of a propylamine group from the amino donor S-adenosylmethioninamine (decarboxy-AdoMet) to putrescine (1,4-diaminobutane) to yield spermidine. The sequence is that of Polyamine aminopropyltransferase from Yersinia pestis bv. Antiqua (strain Antiqua).